Here is a 90-residue protein sequence, read N- to C-terminus: U7-theraphotoxin-Hhn1a 7 (90 aa).

Positions 1–19 (MKTAIFTVVLALAVFAVLS) are cleaved as a signal peptide. The propeptide occupies 20–50 (FGWEANEKALSEGFTELIHEKEAASETEARE). Intrachain disulfides connect cysteine 51–cysteine 65, cysteine 58–cysteine 70, and cysteine 64–cysteine 81.

Belongs to the neurotoxin 10 (Hwtx-1) family. 13 (Hntx-13) subfamily. Expressed by the venom gland.

The protein resides in the secreted. In terms of biological role, ion channel inhibitor. This chain is U7-theraphotoxin-Hhn1a 7, found in Cyriopagopus hainanus (Chinese bird spider).